Consider the following 254-residue polypeptide: Uridylate kinase (254 aa).

An ATP-binding site is contributed by 9–12; the sequence is KLSG. Gly-51 is a binding site for UMP. Residues Gly-52 and Arg-56 each contribute to the ATP site. UMP is bound by residues Asp-72 and 133–140; that span reads SGNPFFTT. The ATP site is built by Thr-160, Tyr-166, and Asp-169.

It belongs to the UMP kinase family. As to quaternary structure, homohexamer.

Its subcellular location is the cytoplasm. The catalysed reaction is UMP + ATP = UDP + ADP. It functions in the pathway pyrimidine metabolism; CTP biosynthesis via de novo pathway; UDP from UMP (UMPK route): step 1/1. Its activity is regulated as follows. Inhibited by UTP. Functionally, catalyzes the reversible phosphorylation of UMP to UDP. This is Uridylate kinase from Synechococcus sp. (strain JA-3-3Ab) (Cyanobacteria bacterium Yellowstone A-Prime).